The chain runs to 532 residues: Probable calcium-binding mitochondrial carrier CBG00135 (532 aa).

4 consecutive EF-hand domains span residues 70 to 105, 107 to 136, 137 to 172, and 173 to 208; these read EKEK…QTPH, PATM…NYVI, AHEA…MGVN, and LDDH…YPST. Ca(2+) contacts are provided by aspartate 83, aspartate 85, aspartate 87, serine 89, and aspartate 94. Ca(2+) is bound by residues aspartate 150, asparagine 152, aspartate 154, glutamate 156, and glutamate 161. Solcar repeat units lie at residues 243 to 329, 339 to 425, and 436 to 526; these read GVWW…IKRW, LTTY…LKSC, and PGVL…VRKQ. 6 helical membrane-spanning segments follow: residues 249 to 266, 304 to 323, 349 to 362, 400 to 419, 442 to 459, and 501 to 518; these read LVAG…TAPF, GNGI…FMSY, SSAG…IYPM, GYLP…LTVY, LACG…SYPL, and GITP…ISYV.

It belongs to the mitochondrial carrier (TC 2.A.29) family.

It is found in the mitochondrion inner membrane. Calcium-dependent mitochondrial solute carrier. In Caenorhabditis briggsae, this protein is Probable calcium-binding mitochondrial carrier CBG00135.